A 456-amino-acid chain; its full sequence is Amino acid transporter AVT6B (456 aa).

11 helical membrane passes run 37–57 (FSGAVFNLATTIIGAGIMALP), 58–78 (ATMKILGLIPGITIIVLMAFL), 118–138 (ILVSNIGVLIVYMIIIGDVLA), 164–184 (TFVLLVTTLTVFAPLTCFKRI), 191–211 (SAISVALAVVFLVITAGITII), 236–256 (LFTVVPVLVNAYICHYNVHSI), 273–293 (ALAMCSSVYVMTSLFGYLLFG), 328–348 (LMLVFPVVFYPLRINIDGLIF), 365–385 (SITAGLIAVIFLGANFIPSIW), 388–408 (FQFTGATAAVCIGFIFPAAVI), and 423–443 (IAICMIVLAVFSNAIAIYSDA).

This sequence belongs to the amino acid/polyamine transporter 2 family. Amino acid/auxin permease (AAAP) (TC 2.A.18.6) subfamily.

The protein resides in the membrane. The polypeptide is Amino acid transporter AVT6B (Arabidopsis thaliana (Mouse-ear cress)).